The following is an 83-amino-acid chain: ATP synthase subunit c 2 (83 aa).

Transmembrane regions (helical) follow at residues 8 to 28 and 58 to 78; these read IASI…PALG and LAMI…LLFA.

This sequence belongs to the ATPase C chain family. F-type ATPases have 2 components, F(1) - the catalytic core - and F(0) - the membrane proton channel. F(1) has five subunits: alpha(3), beta(3), gamma(1), delta(1), epsilon(1). F(0) has four main subunits: a(1), b(1), b'(1) and c(10-14). The alpha and beta chains form an alternating ring which encloses part of the gamma chain. F(1) is attached to F(0) by a central stalk formed by the gamma and epsilon chains, while a peripheral stalk is formed by the delta, b and b' chains.

Its subcellular location is the cell inner membrane. In terms of biological role, f(1)F(0) ATP synthase produces ATP from ADP in the presence of a proton or sodium gradient. F-type ATPases consist of two structural domains, F(1) containing the extramembraneous catalytic core and F(0) containing the membrane proton channel, linked together by a central stalk and a peripheral stalk. During catalysis, ATP synthesis in the catalytic domain of F(1) is coupled via a rotary mechanism of the central stalk subunits to proton translocation. Functionally, key component of the F(0) channel; it plays a direct role in translocation across the membrane. A homomeric c-ring of between 10-14 subunits forms the central stalk rotor element with the F(1) delta and epsilon subunits. The sequence is that of ATP synthase subunit c 2 from Cereibacter sphaeroides (strain ATCC 17029 / ATH 2.4.9) (Rhodobacter sphaeroides).